The primary structure comprises 369 residues: Protein FAM187B (369 aa).

An N-terminal signal peptide occupies residues 1-17; sequence MPPMLWLLLHFAAPALG. At 18–335 the chain is on the extracellular side; that stretch reads FYFSISCPSG…RADSVLKGLK (318 aa). Asn45, Asn68, and Asn130 each carry an N-linked (GlcNAc...) asparagine glycan. The helical transmembrane segment at 336 to 356 threads the bilayer; that stretch reads LVLLVVTVLALLGALLKCIHP. Topologically, residues 357–369 are cytoplasmic; it reads SPGRRSTQVLVVK.

It belongs to the FAM187 family.

It is found in the membrane. This is Protein FAM187B (FAM187B) from Homo sapiens (Human).